The sequence spans 205 residues: Protein GrpE (205 aa).

This sequence belongs to the GrpE family. As to quaternary structure, homodimer.

The protein localises to the cytoplasm. In terms of biological role, participates actively in the response to hyperosmotic and heat shock by preventing the aggregation of stress-denatured proteins, in association with DnaK and GrpE. It is the nucleotide exchange factor for DnaK and may function as a thermosensor. Unfolded proteins bind initially to DnaJ; upon interaction with the DnaJ-bound protein, DnaK hydrolyzes its bound ATP, resulting in the formation of a stable complex. GrpE releases ADP from DnaK; ATP binding to DnaK triggers the release of the substrate protein, thus completing the reaction cycle. Several rounds of ATP-dependent interactions between DnaJ, DnaK and GrpE are required for fully efficient folding. The sequence is that of Protein GrpE from Shewanella loihica (strain ATCC BAA-1088 / PV-4).